A 192-amino-acid polypeptide reads, in one-letter code: Early nodulin-like protein 7 (192 aa).

The first 27 residues, 1 to 27 (MMMMMMRSTCNLTLMLCICALVVASMA), serve as a signal peptide directing secretion. One can recognise a Phytocyanin domain in the interval 32-134 (RDFKVGDEFG…GQRLIVEVMH (103 aa)). Residues Asn-48, Asn-89, and Asn-101 are each glycosylated (N-linked (GlcNAc...) asparagine). The cysteines at positions 88 and 122 are disulfide-linked. Ser-166 is lipidated: GPI-anchor amidated serine. A propeptide spans 167-192 (AASSLPTACLLIPLFLTIASFRFISY) (removed in mature form).

The protein belongs to the early nodulin-like (ENODL) family. In terms of tissue distribution, mostly expressed in flowers, and, to a lower extent, in seeds, but barely in seedlings, stems, leaves and roots.

It is found in the cell membrane. Functionally, may act as a carbohydrate transporter. The polypeptide is Early nodulin-like protein 7 (Arabidopsis thaliana (Mouse-ear cress)).